A 253-amino-acid chain; its full sequence is Triosephosphate isomerase (253 aa).

9 to 11 (NWK) provides a ligand contact to substrate. Catalysis depends on His-95, which acts as the Electrophile. Glu-167 acts as the Proton acceptor in catalysis. Substrate is bound by residues Gly-173, Ser-213, and 234 to 235 (GG). Phosphoserine is present on Ser-213.

The protein belongs to the triosephosphate isomerase family. In terms of assembly, homodimer.

It is found in the cytoplasm. It carries out the reaction D-glyceraldehyde 3-phosphate = dihydroxyacetone phosphate. It functions in the pathway carbohydrate biosynthesis; gluconeogenesis. Its pathway is carbohydrate degradation; glycolysis; D-glyceraldehyde 3-phosphate from glycerone phosphate: step 1/1. In terms of biological role, involved in the gluconeogenesis. Catalyzes stereospecifically the conversion of dihydroxyacetone phosphate (DHAP) to D-glyceraldehyde-3-phosphate (G3P). The protein is Triosephosphate isomerase of Bacillus licheniformis (strain ATCC 14580 / DSM 13 / JCM 2505 / CCUG 7422 / NBRC 12200 / NCIMB 9375 / NCTC 10341 / NRRL NRS-1264 / Gibson 46).